A 25-amino-acid chain; its full sequence is Bombinin-like peptide 4 (25 aa).

F25 bears the Phenylalanine amide mark.

It belongs to the bombinin family. In terms of tissue distribution, expressed by the skin glands.

The protein localises to the secreted. In terms of biological role, has antimicrobial activity, but no hemolytic activity. Preference on killing Gram-negative non-enteric bacteria. The protein is Bombinin-like peptide 4 of Bombina orientalis (Oriental fire-bellied toad).